Reading from the N-terminus, the 370-residue chain is Dihydroorotate dehydrogenase (370 aa).

Substrate-binding positions include Lys82, 135–139 (NSFGM), and Asn200. 82 to 83 (KT) contributes to the FMN binding site. Position 200 (Asn200) interacts with FMN. The active-site Nucleophile is the Cys203. The FMN site is built by Lys241 and Ile269. A substrate-binding site is contributed by 270-271 (NT). FMN-binding positions include Gly297, 328–329 (GG), and 350–351 (AT).

This sequence belongs to the dihydroorotate dehydrogenase family. It depends on FMN as a cofactor.

It carries out the reaction (S)-dihydroorotate + A = orotate + AH2. It participates in pyrimidine metabolism; UMP biosynthesis via de novo pathway. In terms of biological role, catalyzes the conversion of dihydroorotate to orotate. Participates in the pyrimidine biosynthetic pathway. This chain is Dihydroorotate dehydrogenase (pyr4), found in Dictyostelium discoideum (Social amoeba).